We begin with the raw amino-acid sequence, 393 residues long: NAD(P)H-quinone oxidoreductase subunit H, chloroplastic (393 aa).

Belongs to the complex I 49 kDa subunit family. As to quaternary structure, NDH is composed of at least 16 different subunits, 5 of which are encoded in the nucleus.

The protein resides in the plastid. The protein localises to the chloroplast thylakoid membrane. It catalyses the reaction a plastoquinone + NADH + (n+1) H(+)(in) = a plastoquinol + NAD(+) + n H(+)(out). It carries out the reaction a plastoquinone + NADPH + (n+1) H(+)(in) = a plastoquinol + NADP(+) + n H(+)(out). NDH shuttles electrons from NAD(P)H:plastoquinone, via FMN and iron-sulfur (Fe-S) centers, to quinones in the photosynthetic chain and possibly in a chloroplast respiratory chain. The immediate electron acceptor for the enzyme in this species is believed to be plastoquinone. Couples the redox reaction to proton translocation, and thus conserves the redox energy in a proton gradient. In Gossypium barbadense (Sea Island cotton), this protein is NAD(P)H-quinone oxidoreductase subunit H, chloroplastic.